The sequence spans 115 residues: Promotilin (115 aa).

A signal peptide spans 1 to 25 (MLSRKATAVLLAVHAAAMLASQTEA). Residues 43–72 (RYKGQKKSLSVQQRSEEVGPVDPTEPWEEK) are disordered.

The protein belongs to the motilin family.

It localises to the secreted. Functionally, plays an important role in the regulation of interdigestive gastrointestinal motility and indirectly causes rhythmic contraction of duodenal and colonic smooth muscle. The protein is Promotilin (MLN) of Bos taurus (Bovine).